The following is a 544-amino-acid chain: Inosine-5'-monophosphate dehydrogenase (544 aa).

CBS domains are found at residues 132–192 (FITD…PIKS) and 194–250 (MTTE…PYAS). Residues 288-290 (DSS) and 338-340 (GMG) each bind NAD(+). K(+) contacts are provided by Gly-340 and Gly-342. Ser-343 contacts IMP. K(+) is bound at residue Cys-345. The Thioimidate intermediate role is filled by Cys-345. IMP is bound by residues 378 to 380 (DGG), 401 to 402 (GG), and 425 to 429 (YRGMG). Arg-458 (proton acceptor) is an active-site residue. Gln-470 is a binding site for IMP. K(+) contacts are provided by Glu-529, Gly-530, and Gly-531.

Belongs to the IMPDH/GMPR family. In terms of assembly, homotetramer. It depends on K(+) as a cofactor.

It localises to the cytoplasm. It catalyses the reaction IMP + NAD(+) + H2O = XMP + NADH + H(+). It participates in purine metabolism; XMP biosynthesis via de novo pathway; XMP from IMP: step 1/1. With respect to regulation, mycophenolic acid (MPA) is a non-competitive inhibitor that prevents formation of the closed enzyme conformation by binding to the same site as the amobile flap. In contrast, mizoribine monophosphate (MZP) is a competitive inhibitor that induces the closed conformation. MPA is a potent inhibitor of mammalian IMPDHs but a poor inhibitor of the bacterial enzymes. MZP is a more potent inhibitor of bacterial IMPDH. Catalyzes the conversion of inosine 5'-phosphate (IMP) to xanthosine 5'-phosphate (XMP), the first committed and rate-limiting step in the de novo synthesis of guanine nucleotides, and therefore plays an important role in the regulation of cell growth. This chain is Inosine-5'-monophosphate dehydrogenase, found in Cryptococcus neoformans var. neoformans serotype D (strain JEC21 / ATCC MYA-565) (Filobasidiella neoformans).